Reading from the N-terminus, the 740-residue chain is Phosphoribosylformylglycinamidine synthase subunit PurL (740 aa).

The active site involves His50. ATP is bound by residues Tyr53 and Lys92. Glu94 provides a ligand contact to Mg(2+). Substrate contacts are provided by residues 95–98 (SHNH) and Arg117. His96 functions as the Proton acceptor in the catalytic mechanism. A Mg(2+)-binding site is contributed by Asp118. Gln241 is a substrate binding site. Asp269 serves as a coordination point for Mg(2+). A substrate-binding site is contributed by 313-315 (ESQ). 2 residues coordinate ATP: Asp495 and Gly532. Asn533 serves as a coordination point for Mg(2+). Ser535 lines the substrate pocket.

Belongs to the FGAMS family. As to quaternary structure, monomer. Part of the FGAM synthase complex composed of 1 PurL, 1 PurQ and 2 PurS subunits.

It is found in the cytoplasm. It catalyses the reaction N(2)-formyl-N(1)-(5-phospho-beta-D-ribosyl)glycinamide + L-glutamine + ATP + H2O = 2-formamido-N(1)-(5-O-phospho-beta-D-ribosyl)acetamidine + L-glutamate + ADP + phosphate + H(+). It functions in the pathway purine metabolism; IMP biosynthesis via de novo pathway; 5-amino-1-(5-phospho-D-ribosyl)imidazole from N(2)-formyl-N(1)-(5-phospho-D-ribosyl)glycinamide: step 1/2. Functionally, part of the phosphoribosylformylglycinamidine synthase complex involved in the purines biosynthetic pathway. Catalyzes the ATP-dependent conversion of formylglycinamide ribonucleotide (FGAR) and glutamine to yield formylglycinamidine ribonucleotide (FGAM) and glutamate. The FGAM synthase complex is composed of three subunits. PurQ produces an ammonia molecule by converting glutamine to glutamate. PurL transfers the ammonia molecule to FGAR to form FGAM in an ATP-dependent manner. PurS interacts with PurQ and PurL and is thought to assist in the transfer of the ammonia molecule from PurQ to PurL. In Brucella canis (strain ATCC 23365 / NCTC 10854 / RM-666), this protein is Phosphoribosylformylglycinamidine synthase subunit PurL.